Consider the following 351-residue polypeptide: MTTICDLPRDLVARILSRVPLTSMRRVRFTCKRWNTISKDPSFAKTHFGKAARQFIMMSQSRVSLMSVKLHGDGNEDELADPYIYEGYRLDVYALGYDKNLKNHKILRFVDSYEPAVKHSIIEHEIFDLKSNAWRVLDATPDWEIDSYQRGVSLKGNTYFFAKEKIVVEGDDVVVIEDFKDFLICFDFTSERFNLDHVCLYRFTLTMERPVREEQLAVLYQQDTCLMEIWVTNKIEPDVVSWSKVFLAVDMEPLTGSFIPFAFFAGSFFIDEEKKIAVVFDKDQEEINDRAYLIGENGYYKEVDLGYMNGYYQQQVDPRGPDPVFPLVCSYSPSLVTIPQGTRGKRKERDY.

In terms of domain architecture, F-box spans 1-51 (MTTICDLPRDLVARILSRVPLTSMRRVRFTCKRWNTISKDPSFAKTHFGKA).

This Arabidopsis thaliana (Mouse-ear cress) protein is Putative F-box protein At4g09790.